The sequence spans 467 residues: Probable circularly permuted 1,3-beta-glucanase TOS1 (467 aa).

The signal sequence occupies residues 1–21; that stretch reads MKFSSTTLLAGLSSLTATVSA. Residues 158-172 show a composition bias toward low complexity; sequence PAVSSAAADDNANSG. Disordered stretches follow at residues 158–187 and 200–223; these read PAVSSAAADDNANSGSGSGSSAGSGSGYGS and SDISTKSAPTSTSAQPSSSETASV. Gly residues predominate over residues 173–185; the sequence is SGSGSSAGSGSGY. Residues 203 to 222 show a composition bias toward low complexity; that stretch reads STKSAPTSTSAQPSSSETAS. The ExDxxE motif motif lies at 374–379; the sequence is ELDLFE. The disordered stretch occupies residues 391 to 413; sequence HLHDGQGSSQNSNNGGGGSQDYF.

Belongs to the PGA52 family. Cleaved by KEX2 in vitro.

It localises to the secreted. It carries out the reaction Hydrolysis of (1-&gt;3)-beta-D-glucosidic linkages in (1-&gt;3)-beta-D-glucans.. Probable circularly permuted 1,3-beta-glucanase involved in cell wall modification through beta-1,3-glucan network alterations such as increased branching or remodeling. Plays a role in engulfment by host macrophages. The polypeptide is Probable circularly permuted 1,3-beta-glucanase TOS1 (Candida albicans (strain SC5314 / ATCC MYA-2876) (Yeast)).